Here is a 131-residue protein sequence, read N- to C-terminus: Small ribosomal subunit protein uS8 (131 aa).

The protein belongs to the universal ribosomal protein uS8 family. As to quaternary structure, part of the 30S ribosomal subunit. Contacts proteins S5 and S12.

One of the primary rRNA binding proteins, it binds directly to 16S rRNA central domain where it helps coordinate assembly of the platform of the 30S subunit. This chain is Small ribosomal subunit protein uS8, found in Acinetobacter baylyi (strain ATCC 33305 / BD413 / ADP1).